The chain runs to 361 residues: T-box-containing protein TBX6L (361 aa).

Residues 36-209 (LWMKFHQIGT…NNPFAKGFRE (174 aa)) constitute a DNA-binding region (T-box). 2 disordered regions span residues 203-259 (FAKG…VKEE) and 280-323 (HAFP…QLPS). Basic and acidic residues-rich tracts occupy residues 206–220 (GFRE…EGRA) and 234–259 (KLPE…VKEE). A compositionally biased stretch (low complexity) spans 280–290 (HAFPAASPAPA).

The protein resides in the nucleus. Its function is as follows. May be involved in regulating somitogenesis. This is T-box-containing protein TBX6L (TBX6L) from Gallus gallus (Chicken).